We begin with the raw amino-acid sequence, 299 residues long: MSYPQARIGVIGGSGLYQMADLADTVEVQFNTPFGPPSDALVIGTLAGERVAFLPRHGRGHRLLPAELPFQANIYAMKMLGVEYLLSASAVGSLREEYRPRDIVFPDQFFDRTKDRPSTFFGGGLVAHIGFDQPICTELAHLAAEAARGVELIGETRIHTGGTYVCMEGPAFSTLAESRLYRSWGMDIIGMTNLQEAKLAREAEICYATMALVTDYDCWHPDHGAVTVELIIDNLHKNAENAQRIVRAVVERLHAAAPPCASHSALKYALLTQPEDVPQATKQKLAAILAKYPAYRPEV.

Phosphate is bound by residues S14, 56–57 (RH), and 89–90 (SA). M191 is a binding site for substrate. Phosphate is bound at residue T192. Residue 215–217 (DYD) coordinates substrate.

This sequence belongs to the PNP/MTAP phosphorylase family. MTAP subfamily. In terms of assembly, homohexamer. Dimer of a homotrimer.

The catalysed reaction is S-methyl-5'-thioadenosine + phosphate = 5-(methylsulfanyl)-alpha-D-ribose 1-phosphate + adenine. The protein operates within amino-acid biosynthesis; L-methionine biosynthesis via salvage pathway; S-methyl-5-thio-alpha-D-ribose 1-phosphate from S-methyl-5'-thioadenosine (phosphorylase route): step 1/1. Catalyzes the reversible phosphorylation of S-methyl-5'-thioadenosine (MTA) to adenine and 5-methylthioribose-1-phosphate. Involved in the breakdown of MTA, a major by-product of polyamine biosynthesis. Responsible for the first step in the methionine salvage pathway after MTA has been generated from S-adenosylmethionine. Has broad substrate specificity with 6-aminopurine nucleosides as preferred substrates. The protein is S-methyl-5'-thioadenosine phosphorylase of Gloeobacter violaceus (strain ATCC 29082 / PCC 7421).